A 689-amino-acid polypeptide reads, in one-letter code: DNA-directed RNA polymerase subunit beta' (689 aa).

Zn(2+) is bound by residues cysteine 69, cysteine 71, cysteine 87, and cysteine 90. Aspartate 489, aspartate 491, and aspartate 493 together coordinate Mg(2+).

Belongs to the RNA polymerase beta' chain family. RpoC1 subfamily. As to quaternary structure, in plastids the minimal PEP RNA polymerase catalytic core is composed of four subunits: alpha, beta, beta', and beta''. When a (nuclear-encoded) sigma factor is associated with the core the holoenzyme is formed, which can initiate transcription. It depends on Mg(2+) as a cofactor. Requires Zn(2+) as cofactor.

It is found in the plastid. The protein resides in the chloroplast. It carries out the reaction RNA(n) + a ribonucleoside 5'-triphosphate = RNA(n+1) + diphosphate. Functionally, DNA-dependent RNA polymerase catalyzes the transcription of DNA into RNA using the four ribonucleoside triphosphates as substrates. The protein is DNA-directed RNA polymerase subunit beta' of Helianthus annuus (Common sunflower).